Consider the following 341-residue polypeptide: Methionine import ATP-binding protein MetN 1 (341 aa).

The 240-residue stretch at 2–241 folds into the ABC transporter domain; sequence IEFRQVSKSF…PKTTIAQNFV (240 aa). 38–45 lines the ATP pocket; that stretch reads GYSGAGKS.

This sequence belongs to the ABC transporter superfamily. Methionine importer (TC 3.A.1.24) family. In terms of assembly, the complex is composed of two ATP-binding proteins (MetN), two transmembrane proteins (MetI) and a solute-binding protein (MetQ).

The protein resides in the cell membrane. It catalyses the reaction L-methionine(out) + ATP + H2O = L-methionine(in) + ADP + phosphate + H(+). The catalysed reaction is D-methionine(out) + ATP + H2O = D-methionine(in) + ADP + phosphate + H(+). Part of the ABC transporter complex MetNIQ involved in methionine import. Responsible for energy coupling to the transport system. The chain is Methionine import ATP-binding protein MetN 1 from Staphylococcus aureus (strain MRSA252).